Consider the following 142-residue polypeptide: ATP synthase epsilon chain (142 aa).

It belongs to the ATPase epsilon chain family. As to quaternary structure, F-type ATPases have 2 components, CF(1) - the catalytic core - and CF(0) - the membrane proton channel. CF(1) has five subunits: alpha(3), beta(3), gamma(1), delta(1), epsilon(1). CF(0) has three main subunits: a, b and c.

It localises to the cell inner membrane. Its function is as follows. Produces ATP from ADP in the presence of a proton gradient across the membrane. The sequence is that of ATP synthase epsilon chain from Actinobacillus succinogenes (strain ATCC 55618 / DSM 22257 / CCUG 43843 / 130Z).